The primary structure comprises 724 residues: Pediocin PA-1 transport/processing ATP-binding protein PedD (724 aa).

Residues 13–140 (QVDENDCGLA…KEWTQIAIII (128 aa)) enclose the Peptidase C39 domain. Residue Cys19 is part of the active site. 6 helical membrane-spanning segments follow: residues 170–190 (IGLI…GAYF), 207–227 (LSLV…INYI), 284–304 (TTLT…FLAY), 307–327 (INLF…VWLF), 396–416 (IKAA…TFFV), and 426–446 (LLTY…IINL). Residues 170-452 (IGLIITAAAI…IINLQPKLQA (283 aa)) form the ABC transmembrane type-1 domain. Residues 486 to 722 (IEVNHVSFNY…NGYYARLIHN (237 aa)) form the ABC transporter domain. 519-526 (GMSGSGKT) lines the ATP pocket.

The protein belongs to the ABC transporter superfamily. Pediocin PA-1 exporter (TC 3.A.1.112.2) family.

It is found in the cell membrane. Its function is as follows. Involved in the export process of the bacteriocin pediocin PA-1/AcH. Is also essential for pediocin production. The chain is Pediocin PA-1 transport/processing ATP-binding protein PedD (pedD) from Pediococcus acidilactici.